A 187-amino-acid chain; its full sequence is Mitochondrial intermembrane space import and assembly protein 40 (187 aa).

Residues 1-24 (MFRPASRALLRAPAVARGPASRRL) constitute a mitochondrion transit peptide. Residues 25–43 (ISTAPAESKPRSWKNTAVR) lie on the Mitochondrial matrix side of the membrane. A helical; Signal-anchor for type II membrane protein transmembrane segment spans residues 44 to 61 (LGLAAGAIYYYNTSNVFA). Over 62-187 (ENPSFSLNNQ…MDCIEKFKCV (126 aa)) the chain is Mitochondrial intermembrane. The tract at residues 73 to 115 (KKNSAEEPLPTLDSIKPRIREERESAAPKPNAEQAPAQELPFG) is disordered. The span at 87–98 (IKPRIREERESA) shows a compositional bias: basic and acidic residues. 2 disulfides stabilise this stretch: Cys-146/Cys-148 and Cys-167/Cys-180. The CHCH domain maps to 154–187 (HGPCGEEFKAAFSCFVYSEEEPKGMDCIEKFKCV). Residues 157–167 (CGEEFKAAFSC) carry the Cx9C motif motif.

Monomer. The cofactor is Cu(2+). Requires Zn(2+) as cofactor.

It is found in the mitochondrion inner membrane. Its function is as follows. Required for the import and folding of small cysteine-containing proteins (small Tim) in the mitochondrial intermembrane space (IMS). Forms a redox cycle with ERV1 that involves a disulfide relay system. Precursor proteins to be imported into the IMS are translocated in their reduced form into the mitochondria. The oxidized form of MIA40 forms a transient intermolecular disulfide bridge with the reduced precursor protein, resulting in oxidation of the precursor protein that now contains an intramolecular disulfide bond and is able to undergo folding in the IMS. The protein is Mitochondrial intermembrane space import and assembly protein 40 (mia40) of Aspergillus oryzae (strain ATCC 42149 / RIB 40) (Yellow koji mold).